Consider the following 117-residue polypeptide: Histone-like protein Hq1 (117 aa).

Basic residues-rich tracts occupy residues 1–17 and 39–50; these read MPAK…RSKA and RKLRAAQKKLAK. Positions 1–117 are disordered; it reads MPAKKRKTTR…RGRGRPRKKA (117 aa). The span at 51–68 shows a compositional bias: basic and acidic residues; it reads AKKDASRKLAKLRKEAAR. Residues 71-117 are compositionally biased toward basic residues; it reads AAAKKTRAPSKKGRKKATRKKGGGRSRKTARKVSTMKRGRGRPRKKA.

Functionally, binds DNA in vitro. The protein is Histone-like protein Hq1 (hcbA) of Coxiella burnetii (strain RSA 493 / Nine Mile phase I).